Reading from the N-terminus, the 164-residue chain is Putative F-box protein At1g59675 (164 aa).

Residues 9-56 form the F-box domain; it reads SQSDHVPLDLTIEILSRLPAKSVGRFRSVSKLWSANTTSQNFINSFAT.

This Arabidopsis thaliana (Mouse-ear cress) protein is Putative F-box protein At1g59675.